The chain runs to 1191 residues: Roquin-2 (1191 aa).

7 residues coordinate Zn(2+): C14, C17, C33, H35, C38, C50, and D53. Residues 14–54 (CPICYNEFDENVHKPISLGCSHTVCKTCLNKLHRKACPFDQ) form an RING-type; degenerate zinc finger. The interval 91–170 (ENKHYEVAKK…RTVTELILQH (80 aa)) is HEPN-N. The interval 171 to 325 (QNPQQLSANL…SIIDKLQSPE (155 aa)) is ROQ. The HEPN-C stretch occupies residues 326–396 (SFAKSVQELT…GLVDFIQNYS (71 aa)). The C3H1-type zinc-finger motif lies at 410–438 (KYKTSMCRDLRQQGGCPRGTNCTFAHSQE). Disordered stretches follow at residues 528-576 (GANG…NSVP) and 644-680 (ESSLPPASMPYADHYSTFSPRDRMNSSPYQPPPPQPY). Residues 530–546 (NGQNAAGPSADSVTENK) are compositionally biased toward polar residues. S549 is modified (phosphoserine). The segment covering 554–576 (PVSNVAATSAGPSNVGTELNSVP) has biased composition (polar residues). Residues S808, S983, and S1119 each carry the phosphoserine modification.

As to quaternary structure, interacts with EDC4. Interacts with CCR4-NOT deadenylase complex. Interacts with MAP3K5; the interaction is probably stimulus-dependent. In terms of processing, proteolytically cleaved after Arg-509 and Arg-585 by MALT1 in activated CD4(+) T cells; cleavage at Arg-509 and Arg-585 is critical for promoting RC3H1 degradation in response to T-cell receptor (TCR) stimulation, and hence is necessary for prolonging the stability of a set of mRNAs controlling Th17 cell differentiation. Expressed in spleen, testis, ovary and small intestine.

The protein resides in the cytoplasm. It localises to the P-body. It catalyses the reaction S-ubiquitinyl-[E2 ubiquitin-conjugating enzyme]-L-cysteine + [acceptor protein]-L-lysine = [E2 ubiquitin-conjugating enzyme]-L-cysteine + N(6)-ubiquitinyl-[acceptor protein]-L-lysine.. The protein operates within protein modification; protein ubiquitination. With respect to regulation, binding to dsRNA, but not CDE RNA, crosstalks with the E3 ubiquitin ligase activity and may inhibit ubiquitination. Post-transcriptional repressor of mRNAs containing a conserved stem loop motif, called constitutive decay element (CDE), which is often located in the 3'-UTR, as in HMGXB3, ICOS, IER3, NFKBID, NFKBIZ, PPP1R10, TNF and in many more mRNAs. Binds to CDE and promotes mRNA deadenylation and degradation. This process does not involve miRNAs. In follicular helper T (Tfh) cells, represses of ICOS and TNFRSF4 expression, thus preventing spontaneous Tfh cell differentiation, germinal center B-cell differentiation in the absence of immunization and autoimmunity. In resting or LPS-stimulated macrophages, controls inflammation by suppressing TNF expression. Also recognizes CDE in its own mRNA and in that of paralogous RC3H1, possibly leading to feedback loop regulation. miRNA-binding protein that regulates microRNA homeostasis. Enhances DICER-mediated processing of pre-MIR146a but reduces mature MIR146a levels through an increase of 3' end uridylation. Both inhibits ICOS mRNA expression and they may act together to exert the suppression. Acts as a ubiquitin E3 ligase. Pairs with E2 enzymes UBE2B, UBE2D2, UBE2E2, UBE2E3, UBE2G2, UBE2K and UBE2Q2 and produces polyubiquitin chains. Shows the strongest activity when paired with UBE2N:UBE2V1 or UBE2N:UBE2V2 E2 complexes and generate both short and long polyubiquitin chains. Involved in the ubiquitination of MAP3K5. Able to interact with double-stranded RNA (dsRNA). This is Roquin-2 (RC3H2) from Homo sapiens (Human).